Reading from the N-terminus, the 154-residue chain is Large ribosomal subunit protein uL13 (154 aa).

This sequence belongs to the universal ribosomal protein uL13 family. Part of the 50S ribosomal subunit.

Functionally, this protein is one of the early assembly proteins of the 50S ribosomal subunit, although it is not seen to bind rRNA by itself. It is important during the early stages of 50S assembly. The protein is Large ribosomal subunit protein uL13 of Mesorhizobium japonicum (strain LMG 29417 / CECT 9101 / MAFF 303099) (Mesorhizobium loti (strain MAFF 303099)).